The sequence spans 398 residues: Dual-specificity RNA methyltransferase RlmN (398 aa).

Glu119 serves as the catalytic Proton acceptor. The region spanning 125-364 (EADRATLCVS…TIVRKTRGDD (240 aa)) is the Radical SAM core domain. A disulfide bridge connects residues Cys132 and Cys369. Cys139, Cys143, and Cys146 together coordinate [4Fe-4S] cluster. S-adenosyl-L-methionine is bound by residues 193 to 194 (GE), Ser225, 247 to 249 (SLH), and Asn326. Cys369 (S-methylcysteine intermediate) is an active-site residue.

This sequence belongs to the radical SAM superfamily. RlmN family. Requires [4Fe-4S] cluster as cofactor.

It is found in the cytoplasm. It catalyses the reaction adenosine(2503) in 23S rRNA + 2 reduced [2Fe-2S]-[ferredoxin] + 2 S-adenosyl-L-methionine = 2-methyladenosine(2503) in 23S rRNA + 5'-deoxyadenosine + L-methionine + 2 oxidized [2Fe-2S]-[ferredoxin] + S-adenosyl-L-homocysteine. It carries out the reaction adenosine(37) in tRNA + 2 reduced [2Fe-2S]-[ferredoxin] + 2 S-adenosyl-L-methionine = 2-methyladenosine(37) in tRNA + 5'-deoxyadenosine + L-methionine + 2 oxidized [2Fe-2S]-[ferredoxin] + S-adenosyl-L-homocysteine. Functionally, specifically methylates position 2 of adenine 2503 in 23S rRNA and position 2 of adenine 37 in tRNAs. m2A2503 modification seems to play a crucial role in the proofreading step occurring at the peptidyl transferase center and thus would serve to optimize ribosomal fidelity. The polypeptide is Dual-specificity RNA methyltransferase RlmN (Yersinia pestis).